Here is a 146-residue protein sequence, read N- to C-terminus: VHLTGEEKAAVTGLWGKVNVEEVGGEALGRLLVVYPWTQRFFDSFGDLSSPSAVMGNPKVKAHGKKVLNSFSDGLKNLDNLKGTFAKLSELHCDKLHVDPENFRLLGNVLVCVLARHFGKEFTPQVQAAYQKVVAGVATALAHKYH.

Position 1 is an N-acetylvaline (valine 1). In terms of domain architecture, Globin spans 2–146 (HLTGEEKAAV…VATALAHKYH (145 aa)). Threonine 12 carries the post-translational modification Phosphothreonine. Residue serine 44 is modified to Phosphoserine. N6-acetyllysine is present on lysine 59. A heme b-binding site is contributed by histidine 63. Lysine 82 carries the N6-acetyllysine modification. Histidine 92 provides a ligand contact to heme b. At cysteine 93 the chain carries S-nitrosocysteine. Lysine 144 bears the N6-acetyllysine mark.

It belongs to the globin family. In terms of assembly, heterotetramer of two alpha chains and two beta chains. As to expression, red blood cells.

In terms of biological role, involved in oxygen transport from the lung to the various peripheral tissues. The chain is Hemoglobin subunit beta (HBB) from Macroderma gigas (Australian ghost bat).